A 310-amino-acid polypeptide reads, in one-letter code: Ribose-phosphate pyrophosphokinase (310 aa).

ATP-binding positions include 34–36 (DME) and 93–94 (RQ). H127 and D167 together coordinate Mg(2+). K190 is an active-site residue. D-ribose 5-phosphate contacts are provided by residues R192, D216, and 220–224 (DSGGT).

Belongs to the ribose-phosphate pyrophosphokinase family. Class I subfamily. Homohexamer. Mg(2+) serves as cofactor.

The protein resides in the cytoplasm. The enzyme catalyses D-ribose 5-phosphate + ATP = 5-phospho-alpha-D-ribose 1-diphosphate + AMP + H(+). It functions in the pathway metabolic intermediate biosynthesis; 5-phospho-alpha-D-ribose 1-diphosphate biosynthesis; 5-phospho-alpha-D-ribose 1-diphosphate from D-ribose 5-phosphate (route I): step 1/1. Involved in the biosynthesis of the central metabolite phospho-alpha-D-ribosyl-1-pyrophosphate (PRPP) via the transfer of pyrophosphoryl group from ATP to 1-hydroxyl of ribose-5-phosphate (Rib-5-P). This is Ribose-phosphate pyrophosphokinase from Granulibacter bethesdensis (strain ATCC BAA-1260 / CGDNIH1).